Consider the following 510-residue polypeptide: ATP-dependent zinc metalloprotease FtsH 2 (510 aa).

Over 1–4 (MKKN) the chain is Cytoplasmic. The chain crosses the membrane as a helical span at residues 5–25 (LHIIILALSIFINLLFIYIFI). Residues 26–31 (SEVKPN) lie on the Extracellular side of the membrane. Residues 32–52 (LNLNLSFILTAAVIVVTYLLF) form a helical membrane-spanning segment. Over 53 to 510 (KNKFSELMPV…LWEEENTLCV (458 aa)) the chain is Cytoplasmic. An ATP-binding site is contributed by 124–131 (GPPGTGKT). Position 343 (His-343) interacts with Zn(2+). Glu-344 is a catalytic residue. His-347 and Asp-418 together coordinate Zn(2+).

This sequence in the central section; belongs to the AAA ATPase family. In the C-terminal section; belongs to the peptidase M41 family. In terms of assembly, homohexamer. It depends on Zn(2+) as a cofactor.

The protein resides in the cell membrane. Acts as a processive, ATP-dependent zinc metallopeptidase for both cytoplasmic and membrane proteins. Plays a role in the quality control of integral membrane proteins. In Thermoanaerobacter sp. (strain X514), this protein is ATP-dependent zinc metalloprotease FtsH 2.